A 190-amino-acid chain; its full sequence is Xanthine phosphoribosyltransferase (190 aa).

Xanthine is bound by residues L20 and N27. A127–A131 lines the 5-phospho-alpha-D-ribose 1-diphosphate pocket. K155 is a binding site for xanthine.

The protein belongs to the purine/pyrimidine phosphoribosyltransferase family. Xpt subfamily. As to quaternary structure, homodimer.

The protein resides in the cytoplasm. It catalyses the reaction XMP + diphosphate = xanthine + 5-phospho-alpha-D-ribose 1-diphosphate. It functions in the pathway purine metabolism; XMP biosynthesis via salvage pathway; XMP from xanthine: step 1/1. Its function is as follows. Converts the preformed base xanthine, a product of nucleic acid breakdown, to xanthosine 5'-monophosphate (XMP), so it can be reused for RNA or DNA synthesis. The chain is Xanthine phosphoribosyltransferase from Bacteroides thetaiotaomicron (strain ATCC 29148 / DSM 2079 / JCM 5827 / CCUG 10774 / NCTC 10582 / VPI-5482 / E50).